Reading from the N-terminus, the 933-residue chain is MKLKETLNLGKTAFPMRADLPNKEPQWQAAWEQAELYKKRQELNAGKPAFHLHDGPPYANGNIHVGHALNKISKDIIVRSKSMSGFQAPYVPGWDTHGLPIEQVLAKQGIKRKEMDLAEYLEMCRQYALSQVDKQRDDFKRLGVSADWENPYVTLDPQFEADQIRVFGAMAEKGYIYRGAKPVYWSWSSESALAEAEIEYHDIDSTSLYYANKVKDGKGILDTNTYIVVWTTTPFTVTASRGLTVGPDMDYLVVKPAGSDRQYVVAEGLLDSLAGKFGWESFETLASHKGADLEYIVTEHPWDTDVEELVILGDHVTLESGTGIVHTAPGFGEDDYNVGTKYKLEVAVTVDERGLMMENAGPDFHGQFYNKVTPIVIDKLGDLLLAQEVINHSYPFDWRTKKPIIWRAVPQWFASVSDFRQDILDEIEKTTFHPSWGETRLYNMIRDRGDWVISRQRAWGVPLSIFYAEDGTAIMTKEVTDHVADLFQENGSIIWWQKEAKDLLPEGFTHPGSPNGEFTKETDIMDVWFDSGSSWNGVMNARENLSYPADLYLEGSDQYRGWFNSSLITSVAVNGHAPYKAILSQGFVLDGKGEKMSKSKGNIISPNDVAKQYGADILRLWVASVDTDNDVRVSMEILGQVSETYRKIRNTLRFLIANTSDFNPATDTVAYADLGAVDKYMTIVFNQLVATITDAYERYDFMAIYKAVVNFVTVDLSAFYLDFAKDVVYIEAANSLERRRMQTVFYDILVKITKLLTPILPHTTEEIWSYLEYESEAFVQLAEMPVAETFSAQEDILEAWSAFMTLRTQAQKALEEARNAKIIGKSLEAHLTIYASEEVKTLLTALDSDIALLLIVSQLTIADLADAPADAVAFEGIAFMVEHAIGEVCERSRRIDPTTRMRSYNAFVCDHSAKIIEENFPEAVAEGFEESGK.

A 'HIGH' region motif is present at residues Pro57–His67. Glu554 contributes to the L-isoleucyl-5'-AMP binding site. The 'KMSKS' region motif lies at Lys595–Ser599. Lys598 contributes to the ATP binding site.

It belongs to the class-I aminoacyl-tRNA synthetase family. IleS type 1 subfamily. As to quaternary structure, monomer.

The protein resides in the cytoplasm. The enzyme catalyses tRNA(Ile) + L-isoleucine + ATP = L-isoleucyl-tRNA(Ile) + AMP + diphosphate. In terms of biological role, catalyzes the attachment of isoleucine to tRNA(Ile). As IleRS can inadvertently accommodate and process structurally similar amino acids such as valine, to avoid such errors it has two additional distinct tRNA(Ile)-dependent editing activities. One activity is designated as 'pretransfer' editing and involves the hydrolysis of activated Val-AMP. The other activity is designated 'posttransfer' editing and involves deacylation of mischarged Val-tRNA(Ile). The sequence is that of Isoleucine--tRNA ligase from Streptococcus pyogenes serotype M18 (strain MGAS8232).